The chain runs to 167 residues: Claudin domain-containing protein 2 (167 aa).

The next 4 helical transmembrane spans lie at 7 to 27, 59 to 79, 96 to 116, and 134 to 154; these read LQSG…LSTA, LAVT…GMVM, TSAF…GYTV, and WLAL…DMIM.

Belongs to the PMP-22/EMP/MP20 family.

The protein localises to the membrane. In Homo sapiens (Human), this protein is Claudin domain-containing protein 2 (CLDND2).